The following is a 366-amino-acid chain: Anthranilate phosphoribosyltransferase (366 aa).

Residues G79, 82–83 (GD), T87, 89–92 (NIST), 107–115 (KHGNRAATS), and S119 contribute to the 5-phospho-alpha-D-ribose 1-diphosphate site. G79 provides a ligand contact to anthranilate. S91 serves as a coordination point for Mg(2+). N110 contributes to the anthranilate binding site. Residue R165 participates in anthranilate binding. The Mg(2+) site is built by D223 and E224. The tract at residues 342–366 (ESLSGKSMSMRSRTSILSPASGERV) is disordered. Residues 345–359 (SGKSMSMRSRTSILS) are compositionally biased toward polar residues.

The protein belongs to the anthranilate phosphoribosyltransferase family. Homodimer. The cofactor is Mg(2+).

The enzyme catalyses N-(5-phospho-beta-D-ribosyl)anthranilate + diphosphate = 5-phospho-alpha-D-ribose 1-diphosphate + anthranilate. It functions in the pathway amino-acid biosynthesis; L-tryptophan biosynthesis; L-tryptophan from chorismate: step 2/5. Catalyzes the transfer of the phosphoribosyl group of 5-phosphorylribose-1-pyrophosphate (PRPP) to anthranilate to yield N-(5'-phosphoribosyl)-anthranilate (PRA). The chain is Anthranilate phosphoribosyltransferase from Methanosarcina barkeri (strain Fusaro / DSM 804).